A 280-amino-acid chain; its full sequence is Aquaporin PIP2-7 (280 aa).

N-acetylmethionine is present on methionine 1. The Cytoplasmic segment spans residues 1 to 38 (MSKEVSEEGKTHHGKDYVDPPPAPLLDMGELKSWSFYR). The residue at position 3 (lysine 3) is an N6,N6-dimethyllysine. Residues 39–59 (ALIAEFIATLLFLYVTVATVI) form a helical membrane-spanning segment. Residues 60–69 (GHKKQTGPCD) are Extracellular-facing. A helical transmembrane segment spans residues 70–90 (GVGLLGIAWAFGGMIFVLVYC). The Cytoplasmic segment spans residues 91–118 (TAGISGGHINPAVTFGLFLARKVSLVRA). The short motif at 100–102 (NPA) is the NPA 1 element. A helical membrane pass occupies residues 119 to 139 (LGYMIAQCLGAICGVGFVKAF). At 140–160 (MKTPYNTLGGGANTVADGYSK) the chain is on the extracellular side. The chain crosses the membrane as a helical span at residues 161-181 (GTALGAEIIGTFVLVYTVFSA). The Cytoplasmic portion of the chain corresponds to 182-192 (TDPKRSARDSH). Residues 193–213 (IPVLAPLPIGFAVFMVHLATI) traverse the membrane as a helical segment. The Extracellular portion of the chain corresponds to 214–242 (PITGTGINPARSFGAAVIYNNEKAWDDQW). The NPA 2 signature appears at 221–223 (NPA). The helical transmembrane segment at 243–263 (IFWVGPFLGALAAAAYHQYIL) threads the bilayer. Over 264–280 (RASAIKALGSFRSNATN) the chain is Cytoplasmic. 2 positions are modified to phosphoserine: serine 273 and serine 276. The residue at position 279 (threonine 279) is a Phosphothreonine.

The protein belongs to the MIP/aquaporin (TC 1.A.8) family. PIP (TC 1.A.8.11) subfamily. In terms of assembly, interacts with SYP61 and SYP121 in trafficking vesicles and at the plasma membrane. As to expression, highly expressed in flowers, expressed at low levels in siliques, and at low level in leaves and roots. Highly levels in elongating cells in both roots and shoots.

Its subcellular location is the cell membrane. Functionally, water channel required to facilitate the transport of water across cell membrane. May be involved in the osmoregulation in plants under high osmotic stress such as under a high salt condition. The polypeptide is Aquaporin PIP2-7 (Arabidopsis thaliana (Mouse-ear cress)).